The chain runs to 305 residues: Tyrosine recombinase XerC (305 aa).

Residues 4–95 (TSIQALINKW…AVKNFYRFLE (92 aa)) form the Core-binding (CB) domain. A Tyr recombinase domain is found at 116 to 298 (LLPKALSEDD…SIKHLEAVYT (183 aa)). Catalysis depends on residues Arg159, Lys182, His250, Arg253, and His276. The active-site O-(3'-phospho-DNA)-tyrosine intermediate is Tyr285.

This sequence belongs to the 'phage' integrase family. XerC subfamily. As to quaternary structure, forms a cyclic heterotetrameric complex composed of two molecules of XerC and two molecules of XerD.

The protein localises to the cytoplasm. Its function is as follows. Site-specific tyrosine recombinase, which acts by catalyzing the cutting and rejoining of the recombining DNA molecules. The XerC-XerD complex is essential to convert dimers of the bacterial chromosome into monomers to permit their segregation at cell division. It also contributes to the segregational stability of plasmids. This chain is Tyrosine recombinase XerC, found in Rickettsia rickettsii (strain Iowa).